A 1234-amino-acid polypeptide reads, in one-letter code: Chromosome-associated kinesin KIF4B (1234 aa).

The 328-residue stretch at 9–336 (PVRVALRCRP…LRYADRARKI (328 aa)) folds into the Kinesin motor domain. ATP is bound at residue 88-95 (GQTGSGKT). A coiled-coil region spans residues 350-999 (ELNHLKQQVQ…IKQKLILLQV (650 aa)). A Phosphoserine modification is found at Ser394. 2 disordered regions span residues 494-513 (EEAQ…AFTT) and 712-737 (KRLK…HGKE). Residues 498–513 (VETSPETSRSSDAFTT) show a composition bias toward polar residues. Residues 663-1234 (QWKQKKDKEV…GCSPIEEEAH (572 aa)) form an interaction with PRC1 region. Residues 713–737 (RLKDALQKQREVTDKRKETQSHGKE) show a composition bias toward basic and acidic residues. Positions 793–798 (PKLRKC) match the Nuclear localization signal motif. Thr799 is modified (phosphothreonine). 6 positions are modified to phosphoserine: Ser801, Ser951, Ser1001, Ser1013, Ser1017, and Ser1028. A globular region spans residues 1000-1234 (ASRQKHLPND…GCSPIEEEAH (235 aa)). Disordered regions lie at residues 1007–1030 (PNDT…PSRV), 1052–1076 (VNEH…KPTK), 1122–1143 (RQQG…GSFK), and 1183–1234 (TAPA…EEAH). Over residues 1056–1071 (EDGDGDGDSDEGDDEE) the composition is skewed to acidic residues. Residues 1086–1144 (QGCSCKGWCGNKQCGCRKQKSDCGVDCSCDPTKCRNRQQGKDSLGTVEQTQDSEGSFKL) form a CRD; required for [4Fe-4S] cluster binding and localization to the spindle midzone and midbody during anaphase and telophase region. A Phosphoserine modification is found at Ser1128. Position 1183 is a phosphothreonine (Thr1183). The residue at position 1188 (Ser1188) is a Phosphoserine. A Glycyl lysine isopeptide (Lys-Gly) (interchain with G-Cter in SUMO2) cross-link involves residue Lys1196. Ser1227 carries the phosphoserine modification.

This sequence belongs to the TRAFAC class myosin-kinesin ATPase superfamily. Kinesin family. Chromokinesin subfamily. It depends on [2Fe-2S] cluster as a cofactor. [4Fe-4S] cluster is required as a cofactor. In terms of tissue distribution, specifically expressed in testis.

The protein localises to the nucleus matrix. The protein resides in the cytoplasm. Its subcellular location is the cytoskeleton. Iron-sulfur (Fe-S) cluster binding motor protein that has a role in chromosome segregation during mitosis. Translocates PRC1 to the plus ends of interdigitating spindle microtubules during the metaphase to anaphase transition, an essential step for the formation of an organized central spindle midzone and midbody and for successful cytokinesis. May play a role in mitotic chromosomal positioning and bipolar spindle stabilization. This Homo sapiens (Human) protein is Chromosome-associated kinesin KIF4B (KIF4B).